The primary structure comprises 385 residues: 4-hydroxy-3-methylbut-2-en-1-yl diphosphate synthase (flavodoxin) 2 (385 aa).

[4Fe-4S] cluster-binding residues include C280, C283, C315, and E322.

The protein belongs to the IspG family. The cofactor is [4Fe-4S] cluster.

The enzyme catalyses (2E)-4-hydroxy-3-methylbut-2-enyl diphosphate + oxidized [flavodoxin] + H2O + 2 H(+) = 2-C-methyl-D-erythritol 2,4-cyclic diphosphate + reduced [flavodoxin]. It participates in isoprenoid biosynthesis; isopentenyl diphosphate biosynthesis via DXP pathway; isopentenyl diphosphate from 1-deoxy-D-xylulose 5-phosphate: step 5/6. Converts 2C-methyl-D-erythritol 2,4-cyclodiphosphate (ME-2,4cPP) into 1-hydroxy-2-methyl-2-(E)-butenyl 4-diphosphate. In Streptomyces coelicolor (strain ATCC BAA-471 / A3(2) / M145), this protein is 4-hydroxy-3-methylbut-2-en-1-yl diphosphate synthase (flavodoxin) 2.